We begin with the raw amino-acid sequence, 292 residues long: N-acetylneuraminate lyase (292 aa).

Residues S47 and T48 each contribute to the aceneuramate site. Catalysis depends on Y136, which acts as the Proton donor. K164 (schiff-base intermediate with substrate) is an active-site residue. Residues T166, G188, D190, E191, and S207 each contribute to the aceneuramate site.

It belongs to the DapA family. NanA subfamily. In terms of assembly, homotetramer.

It is found in the cytoplasm. The catalysed reaction is aceneuramate = aldehydo-N-acetyl-D-mannosamine + pyruvate. The protein operates within amino-sugar metabolism; N-acetylneuraminate degradation; D-fructose 6-phosphate from N-acetylneuraminate: step 1/5. Catalyzes the reversible aldol cleavage of N-acetylneuraminic acid (sialic acid; Neu5Ac) to form pyruvate and N-acetylmannosamine (ManNAc) via a Schiff base intermediate. This is N-acetylneuraminate lyase from Actinobacillus pleuropneumoniae serotype 5b (strain L20).